The chain runs to 234 residues: Phosphoribosylaminoimidazole-succinocarboxamide synthase (234 aa).

It belongs to the SAICAR synthetase family.

It catalyses the reaction 5-amino-1-(5-phospho-D-ribosyl)imidazole-4-carboxylate + L-aspartate + ATP = (2S)-2-[5-amino-1-(5-phospho-beta-D-ribosyl)imidazole-4-carboxamido]succinate + ADP + phosphate + 2 H(+). It functions in the pathway purine metabolism; IMP biosynthesis via de novo pathway; 5-amino-1-(5-phospho-D-ribosyl)imidazole-4-carboxamide from 5-amino-1-(5-phospho-D-ribosyl)imidazole-4-carboxylate: step 1/2. This is Phosphoribosylaminoimidazole-succinocarboxamide synthase from Clostridium botulinum (strain Loch Maree / Type A3).